A 202-amino-acid chain; its full sequence is NAD(P)H-quinone oxidoreductase subunit I (202 aa).

4Fe-4S ferredoxin-type domains follow at residues 55–84 and 95–124; these read GRIHYEFDKCIACEVCVRVCPINLPVVDWV and KNYSIDFGACIFCGNCVEYCPTNCLSMTEE. Residues cysteine 64, cysteine 67, cysteine 70, cysteine 74, cysteine 104, cysteine 107, cysteine 110, and cysteine 114 each contribute to the [4Fe-4S] cluster site. Residues 168 to 187 are compositionally biased toward basic and acidic residues; sequence EYDPHVVPSDRPRAGQRPEE. Residues 168–202 are disordered; it reads EYDPHVVPSDRPRAGQRPEELVDQYKQAAAANEEN.

Belongs to the complex I 23 kDa subunit family. NDH-1 is composed of at least 11 different subunits. [4Fe-4S] cluster serves as cofactor.

The protein resides in the cellular thylakoid membrane. The catalysed reaction is a plastoquinone + NADH + (n+1) H(+)(in) = a plastoquinol + NAD(+) + n H(+)(out). The enzyme catalyses a plastoquinone + NADPH + (n+1) H(+)(in) = a plastoquinol + NADP(+) + n H(+)(out). NDH-1 shuttles electrons from an unknown electron donor, via FMN and iron-sulfur (Fe-S) centers, to quinones in the respiratory and/or the photosynthetic chain. The immediate electron acceptor for the enzyme in this species is believed to be plastoquinone. Couples the redox reaction to proton translocation, and thus conserves the redox energy in a proton gradient. This chain is NAD(P)H-quinone oxidoreductase subunit I, found in Synechococcus elongatus (strain ATCC 33912 / PCC 7942 / FACHB-805) (Anacystis nidulans R2).